Consider the following 196-residue polypeptide: Signaling threshold-regulating transmembrane adapter 1 (196 aa).

Positions 1-24 (MNQADPRLRAVCLWTLTSAAMSRG) are cleaved as a signal peptide. Residues 25–40 (DNCTDLLALGIPSITQ) lie on the Extracellular side of the membrane. The N-linked (GlcNAc...) asparagine glycan is linked to N26. The chain crosses the membrane as a helical span at residues 41–61 (AWGLWVLLGAVTLLFLISLAA). The Cytoplasmic segment spans residues 62–196 (HLSQWTRGRS…AYANSQPAAS (135 aa)). 2 positions are modified to phosphoserine: S80 and S83. A Phosphotyrosine modification is found at Y90. Residues 90 to 93 (YGNL) are interaction with GRB2. S102 is modified (phosphoserine). The residue at position 127 (Y127) is a Phosphotyrosine. The segment at 132-167 (LRPPQGRIPGPGTPVKYSEVVLDSEPKSQASGPEPE) is disordered. T144 carries the phosphothreonine modification. Residues 146-151 (VKYSEV) form an interaction with PTPN11 region. Residues Y148 and Y169 each carry the phosphotyrosine modification. Positions 169-172 (YASV) are interaction with CSK. A Phosphoserine modification is found at S182. Y188 is modified (phosphotyrosine). Positions 188–191 (YANS) are interaction with GRB2.

As to quaternary structure, homodimer; disulfide-linked. When phosphorylated, interacts with PTPN11/SHP2, GRB2 and CSK. In terms of processing, phosphorylated on tyrosines by LCK, FYN or ZAP70 upon TCR activation; which leads to the recruitment of PTPN11, GRB2 and CSK. In terms of tissue distribution, specifically expressed in T- and B-cells. Present in plasma cells but not in germinal center B-cells (at protein level). Expressed in T- and B-cell lymphoma.

The protein resides in the cell membrane. In terms of biological role, negatively regulates TCR (T-cell antigen receptor)-mediated signaling in T-cells. Involved in positive selection of T-cells. This chain is Signaling threshold-regulating transmembrane adapter 1 (SIT1), found in Homo sapiens (Human).